The following is a 526-amino-acid chain: Probable feruloyl esterase B (526 aa).

An N-terminal signal peptide occupies residues 1–18 (MARLSLLTLLALGSAALA). 2 cysteine pairs are disulfide-bonded: C27–C74 and C62–C113. A glycan (N-linked (GlcNAc...) asparagine) is linked at N137. Cystine bridges form between C186/C441, C255/C272, C281/C291, and C503/C525. The Acyl-ester intermediate role is filled by S187. N-linked (GlcNAc...) asparagine glycosylation occurs at N233. Ca(2+) contacts are provided by D256, D259, A261, D263, and I265. N-linked (GlcNAc...) asparagine glycosylation is present at N311. Active-site charge relay system residues include D400 and H440. Residue N516 is glycosylated (N-linked (GlcNAc...) asparagine).

Belongs to the tannase family.

It localises to the secreted. It carries out the reaction feruloyl-polysaccharide + H2O = ferulate + polysaccharide.. Functionally, involved in degradation of plant cell walls. Hydrolyzes the feruloyl-arabinose ester bond in arabinoxylans as well as the feruloyl-galactose and feruloyl-arabinose ester bonds in pectin. This is Probable feruloyl esterase B (faeB) from Aspergillus clavatus (strain ATCC 1007 / CBS 513.65 / DSM 816 / NCTC 3887 / NRRL 1 / QM 1276 / 107).